We begin with the raw amino-acid sequence, 317 residues long: Melanocyte-stimulating hormone receptor (317 aa).

Over 1-37 (MPVLGSQRRLLGSLNCTPPATFPLMLAPNRTGPQCLE) the chain is Extracellular. The N-linked (GlcNAc...) asparagine glycan is linked to asparagine 29. A helical membrane pass occupies residues 38–63 (VSIPNGLFLSLGLVSLVENVLVVAAI). Residues 64 to 72 (AKNSNLHSP) lie on the Cytoplasmic side of the membrane. The chain crosses the membrane as a helical span at residues 73–93 (MYYFICCLAVSDLLVSVSNVL). The Extracellular segment spans residues 94–118 (ETAVMLLLEAGALAARAAVVQQLDN). A helical transmembrane segment spans residues 119–140 (VIDVLICGSMVSSLCFLGAIAV). The Cytoplasmic portion of the chain corresponds to 141–163 (DRYISIFYALRYHSVVTLPRAWR). Residues 164-183 (IIAAIWVASILTSLLFITYY) form a helical membrane-spanning segment. Residues 184 to 191 (NHTVVLLC) lie on the Extracellular side of the membrane. A helical membrane pass occupies residues 192–211 (LVGFFIAMLALMAVLYVHML). Topologically, residues 212–240 (ARACQHARGIARLQKRQRPIHRGFGLKGA) are cytoplasmic. The chain crosses the membrane as a helical span at residues 241–266 (ATLTILLGVFFLCWGPFFLHLSLIVL). Topologically, residues 267–279 (CPQHPTCGCIFKN) are extracellular. Residues 280 to 300 (FNLFLALIICNAIVDPLIYAF) traverse the membrane as a helical segment. Over 301–317 (RSQELRKTLQEVLQCSW) the chain is Cytoplasmic. Cysteine 315 carries the S-palmitoyl cysteine lipid modification.

It belongs to the G-protein coupled receptor 1 family. Interacts with MGRN1, but does not undergo MGRN1-mediated ubiquitination; this interaction competes with GNAS-binding and thus inhibits agonist-induced cAMP production. Interacts with OPN3; the interaction results in a decrease in MC1R-mediated cAMP signaling and ultimately a decrease in melanin production in melanocytes.

It is found in the cell membrane. Receptor for MSH (alpha, beta and gamma) and ACTH. The activity of this receptor is mediated by G proteins which activate adenylate cyclase. Mediates melanogenesis, the production of eumelanin (black/brown) and phaeomelanin (red/yellow), via regulation of cAMP signaling in melanocytes. This is Melanocyte-stimulating hormone receptor (MC1R) from Rangifer tarandus (Reindeer).